The chain runs to 322 residues: Beta-ketoacyl-[acyl-carrier-protein] synthase III (322 aa).

Active-site residues include Cys-113 and His-249. The tract at residues 250–254 (QANIR) is ACP-binding. The active site involves Asn-279.

This sequence belongs to the thiolase-like superfamily. FabH family. Homodimer.

It localises to the cytoplasm. The catalysed reaction is malonyl-[ACP] + acetyl-CoA + H(+) = 3-oxobutanoyl-[ACP] + CO2 + CoA. It participates in lipid metabolism; fatty acid biosynthesis. In terms of biological role, catalyzes the condensation reaction of fatty acid synthesis by the addition to an acyl acceptor of two carbons from malonyl-ACP. Catalyzes the first condensation reaction which initiates fatty acid synthesis and may therefore play a role in governing the total rate of fatty acid production. Possesses both acetoacetyl-ACP synthase and acetyl transacylase activities. Its substrate specificity determines the biosynthesis of branched-chain and/or straight-chain of fatty acids. The protein is Beta-ketoacyl-[acyl-carrier-protein] synthase III of Thioalkalivibrio sulfidiphilus (strain HL-EbGR7).